The following is a 786-amino-acid chain: MTKKLTIKRKVKEPEPQNEAPDSHESSDNEEEEEEDLLQAVKDPGEDSTDDEGIDQEYQTDSSEDLEFESDEEGNYLGRKGAEGSSGDDDEESAEDEEEEDDADAKKSSKNNDEEAATTSKSIKKSQEKPTSSNKVVPVVPARDPSKVEYADSDTSDEEDIRNTVGNIPMHWYDEYKHIGYDWDAKKIVKPPKGDQIDDFLRKIEDPNFWRTVKDPLTGQEVLLTDADIALIKRINSGRIPNEEHDEYAPWIEWFTSEVEKMPIKNVPDHKRSFLPSGSEKKTVSRMVHALKMGWMKTTEEVQREKQEKRGPKFYMLWETDTSREQMRRIHDPVSAPKRDLPGHAESYNPPPEYLFDEKEAKEWHKLKDEPHRRKLHFMPQKFKSLREVPAYSRYLRERFLRCLDLYLCPRAKRVKLNIDAEYLIPKLPSPRDLQPFPTVESLVYRGHTDLVRSVSVEPKGEYLVSGSDDKTVKIWEIATGRCIRTIETEDVVRCVAWCPNAKLSIIAVATGSRLLLVNPKVGDKLLVKKTDDLLAEAPVLDVIENERIKTAVQWANAEPADQEKGVRVIITHFKPIRQVTWHGRGDYLATVMPEGANRSALIHQLSKRRSQIPFSKSKGLIQCVLFHPVKPCFFVATQHNIRIYDLVKQELIKKLLTNSKWISGMSIHPKGDNLLVSTYDKKMLWFDLDLSTKPYQTMRLHRNAVRSVAFHLRYPLFASGSDDQAVIVSHGMVYNDLLQNPLIVPLKKLQTHEKREEFGVLDVNWHPVQPWVFSTGADCTIRLFT.

The segment covering 1 to 11 (MTKKLTIKRKV) has biased composition (basic residues). Residues 1-161 (MTKKLTIKRK…DSDTSDEEDI (161 aa)) form a disordered region. Acidic residues-rich tracts occupy residues 28–37 (DNEEEEEEDL), 46–55 (EDSTDDEGID), 62–74 (SSED…DEEG), and 86–103 (SGDD…EDDA). Positions 104–113 (DAKKSSKNND) are enriched in basic and acidic residues. Residues 151-160 (ADSDTSDEED) show a composition bias toward acidic residues. 7 WD repeats span residues 447–488 (GHTD…RTIE), 490–528 (EDVV…KLLV), 572–614 (THFK…SQIP), 617–655 (KSKG…LIKK), 658–697 (TNSK…KPYQ), 701–740 (LHRN…DLLQ), and 756–786 (REEF…RLFT).

The protein belongs to the WD repeat BOP1/ERB1 family.

It localises to the nucleus. The protein localises to the nucleolus. It is found in the nucleoplasm. Required for maturation of ribosomal RNAs and formation of the large ribosomal subunit. This chain is Ribosome biogenesis protein BOP1 homolog, found in Drosophila pseudoobscura pseudoobscura (Fruit fly).